A 617-amino-acid chain; its full sequence is Na(+)/H(+) antiporter NhaA 1 (617 aa).

The tract at residues 1–433 (MTVTEQTTAR…GWAIFRITDW (433 aa)) is na(+)/H(+) antiporter NhaA. The next 11 helical transmembrane spans lie at 33–53 (AAAL…SPWA), 75–95 (MTVK…IVGL), 113–133 (AVPV…FLAF), 141–161 (HAWG…LAII), 171–191 (LFLL…IAVF), 194–214 (DAIQ…LALV), 234–254 (VALY…ALLI), 304–324 (VGPA…AGVL), 340–360 (WGVV…ATWL), 378–398 (IAGG…IVDI), and 411–431 (IGVL…FRIT). Positions 434–617 (LSPPEPVGLK…LIRALEAGRR (184 aa)) constitute a Thioredoxin domain.

The protein in the N-terminal section; belongs to the NhaA Na(+)/H(+) (TC 2.A.33) antiporter family.

The protein localises to the cell membrane. It carries out the reaction Na(+)(in) + 2 H(+)(out) = Na(+)(out) + 2 H(+)(in). In terms of biological role, na(+)/H(+) antiporter that extrudes sodium in exchange for external protons. In Mycolicibacterium vanbaalenii (strain DSM 7251 / JCM 13017 / BCRC 16820 / KCTC 9966 / NRRL B-24157 / PYR-1) (Mycobacterium vanbaalenii), this protein is Na(+)/H(+) antiporter NhaA 1.